A 174-amino-acid chain; its full sequence is ATP-dependent protease subunit HslV (174 aa).

The active site involves Thr-2. Na(+) is bound by residues Gly-157, Cys-160, and Thr-163.

The protein belongs to the peptidase T1B family. HslV subfamily. A double ring-shaped homohexamer of HslV is capped on each side by a ring-shaped HslU homohexamer. The assembly of the HslU/HslV complex is dependent on binding of ATP.

The protein resides in the cytoplasm. It catalyses the reaction ATP-dependent cleavage of peptide bonds with broad specificity.. With respect to regulation, allosterically activated by HslU binding. Its function is as follows. Protease subunit of a proteasome-like degradation complex believed to be a general protein degrading machinery. This chain is ATP-dependent protease subunit HslV, found in Shewanella sediminis (strain HAW-EB3).